The primary structure comprises 291 residues: Sulfate transport system permease protein CysW (291 aa).

The Cytoplasmic portion of the chain corresponds to 1–22 (MAEVTQLKRYDARPINWGKWFL). A helical transmembrane segment spans residues 23–43 (IGIGMLVSAFILLVPMIYIFV). Residues 44-69 (QAFSKGLMPVLQNLADPDMLHAIWLT) lie on the Periplasmic side of the membrane. In terms of domain architecture, ABC transmembrane type-1 spans 66 to 270 (IWLTVMIALI…MAIITLFLKS (205 aa)). A helical membrane pass occupies residues 70–90 (VMIALIAVPVNLVFGILLAWL). Topologically, residues 91–104 (VTRFNFPGRQLLLT) are cytoplasmic. A helical transmembrane segment spans residues 105-125 (LLDIPFAVSPVVAGLVYLLFY). Over 126–141 (GSNGPLGGWLDEHNLQ) the chain is Periplasmic. The chain crosses the membrane as a helical span at residues 142–162 (IMFSWPGMVLVTIFVTCPFVV). At 163 to 200 (RELVPVMLSQGSQEDEAAILLGASGWQMFRRVTLPNIR) the chain is on the cytoplasmic side. A helical membrane pass occupies residues 201–221 (WALLYGVVLTNARAIGEFGAV). The Periplasmic portion of the chain corresponds to 222 to 247 (SVVSGSIRGETLSLPLQIELLEQDYN). A helical membrane pass occupies residues 248 to 268 (TVGSFTAAALLTLMAIITLFL). Residues 269–291 (KSMLQWRLENQEKRAQQEEHHEH) are Cytoplasmic-facing.

This sequence belongs to the binding-protein-dependent transport system permease family. CysTW subfamily. As to quaternary structure, the complex is composed of two ATP-binding proteins (CysA), two transmembrane proteins (CysT and CysW) and a solute-binding protein (CysP).

The protein resides in the cell inner membrane. Its function is as follows. Part of the ABC transporter complex CysAWTP (TC 3.A.1.6.1) involved in sulfate/thiosulfate import. Probably responsible for the translocation of the substrate across the membrane. In Escherichia coli O6:H1 (strain CFT073 / ATCC 700928 / UPEC), this protein is Sulfate transport system permease protein CysW (cysW).